Reading from the N-terminus, the 460-residue chain is C4-dicarboxylate transport protein (460 aa).

The next 9 membrane-spanning stretches (helical) occupy residues serine 20–proline 40, leucine 56–methionine 76, tyrosine 88–valine 108, isoleucine 153–glycine 173, isoleucine 200–isoleucine 220, leucine 234–cysteine 254, valine 301–leucine 321, isoleucine 342–glycine 362, and isoleucine 364–isoleucine 384. The tract at residues proline 438 to valine 460 is disordered.

Belongs to the dicarboxylate/amino acid:cation symporter (DAACS) (TC 2.A.23) family.

The protein resides in the cell inner membrane. Its function is as follows. Responsible for the transport of dicarboxylates such as succinate, fumarate, and malate from the periplasm across the membrane. This Pseudomonas savastanoi pv. phaseolicola (strain 1448A / Race 6) (Pseudomonas syringae pv. phaseolicola (strain 1448A / Race 6)) protein is C4-dicarboxylate transport protein.